The primary structure comprises 314 residues: 1D-myo-inositol 2-acetamido-2-deoxy-alpha-D-glucopyranoside deacetylase 2 (314 aa).

Zn(2+) is bound by residues H25, D28, and H161.

The protein belongs to the MshB deacetylase family. Zn(2+) serves as cofactor.

It catalyses the reaction 1D-myo-inositol 2-acetamido-2-deoxy-alpha-D-glucopyranoside + H2O = 1D-myo-inositol 2-amino-2-deoxy-alpha-D-glucopyranoside + acetate. Functionally, catalyzes the deacetylation of 1D-myo-inositol 2-acetamido-2-deoxy-alpha-D-glucopyranoside (GlcNAc-Ins) in the mycothiol biosynthesis pathway. This chain is 1D-myo-inositol 2-acetamido-2-deoxy-alpha-D-glucopyranoside deacetylase 2, found in Frankia casuarinae (strain DSM 45818 / CECT 9043 / HFP020203 / CcI3).